The following is a 307-amino-acid chain: Ribonuclease Z (307 aa).

Zn(2+) contacts are provided by histidine 63, histidine 65, aspartate 67, histidine 68, histidine 141, aspartate 212, and histidine 270. The Proton acceptor role is filled by aspartate 67.

This sequence belongs to the RNase Z family. In terms of assembly, homodimer. Requires Zn(2+) as cofactor.

It catalyses the reaction Endonucleolytic cleavage of RNA, removing extra 3' nucleotides from tRNA precursor, generating 3' termini of tRNAs. A 3'-hydroxy group is left at the tRNA terminus and a 5'-phosphoryl group is left at the trailer molecule.. In terms of biological role, zinc phosphodiesterase, which displays some tRNA 3'-processing endonuclease activity. Probably involved in tRNA maturation, by removing a 3'-trailer from precursor tRNA. This Bacillus cereus (strain ZK / E33L) protein is Ribonuclease Z.